The sequence spans 224 residues: dTTP/UTP pyrophosphatase (224 aa).

Asp-77 (proton acceptor) is an active-site residue.

The protein belongs to the Maf family. YhdE subfamily. Requires a divalent metal cation as cofactor.

The protein localises to the cytoplasm. It carries out the reaction dTTP + H2O = dTMP + diphosphate + H(+). It catalyses the reaction UTP + H2O = UMP + diphosphate + H(+). Its function is as follows. Nucleoside triphosphate pyrophosphatase that hydrolyzes dTTP and UTP. May have a dual role in cell division arrest and in preventing the incorporation of modified nucleotides into cellular nucleic acids. The protein is dTTP/UTP pyrophosphatase of Dehalococcoides mccartyi (strain ATCC BAA-2100 / JCM 16839 / KCTC 5957 / BAV1).